Here is a 475-residue protein sequence, read N- to C-terminus: Ribulose bisphosphate carboxylase large chain (475 aa).

The propeptide occupies 1-2 (MS). At Pro3 the chain carries N-acetylproline. Lys14 carries the N6,N6,N6-trimethyllysine modification. Substrate is bound by residues Asn123 and Thr173. The active-site Proton acceptor is the Lys175. Lys177 lines the substrate pocket. The Mg(2+) site is built by Lys201, Asp203, and Glu204. At Lys201 the chain carries N6-carboxylysine. Residue His294 is the Proton acceptor of the active site. Substrate-binding residues include Arg295, His327, and Ser379.

It belongs to the RuBisCO large chain family. Type I subfamily. As to quaternary structure, heterohexadecamer of 8 large chains and 8 small chains; disulfide-linked. The disulfide link is formed within the large subunit homodimers. Requires Mg(2+) as cofactor. The disulfide bond which can form in the large chain dimeric partners within the hexadecamer appears to be associated with oxidative stress and protein turnover.

It is found in the plastid. It localises to the chloroplast. The catalysed reaction is 2 (2R)-3-phosphoglycerate + 2 H(+) = D-ribulose 1,5-bisphosphate + CO2 + H2O. The enzyme catalyses D-ribulose 1,5-bisphosphate + O2 = 2-phosphoglycolate + (2R)-3-phosphoglycerate + 2 H(+). Functionally, ruBisCO catalyzes two reactions: the carboxylation of D-ribulose 1,5-bisphosphate, the primary event in carbon dioxide fixation, as well as the oxidative fragmentation of the pentose substrate in the photorespiration process. Both reactions occur simultaneously and in competition at the same active site. The polypeptide is Ribulose bisphosphate carboxylase large chain (Nandina domestica (Heavenly bamboo)).